The sequence spans 878 residues: Alanine--tRNA ligase (878 aa).

Zn(2+)-binding residues include histidine 567, histidine 571, cysteine 669, and histidine 673.

The protein belongs to the class-II aminoacyl-tRNA synthetase family. Zn(2+) serves as cofactor.

The protein localises to the cytoplasm. The enzyme catalyses tRNA(Ala) + L-alanine + ATP = L-alanyl-tRNA(Ala) + AMP + diphosphate. Functionally, catalyzes the attachment of alanine to tRNA(Ala) in a two-step reaction: alanine is first activated by ATP to form Ala-AMP and then transferred to the acceptor end of tRNA(Ala). Also edits incorrectly charged Ser-tRNA(Ala) and Gly-tRNA(Ala) via its editing domain. The polypeptide is Alanine--tRNA ligase (Rickettsia akari (strain Hartford)).